The sequence spans 269 residues: Putative pyruvate, phosphate dikinase regulatory protein (269 aa).

151–158 (GISRTSKT) contacts ADP.

The protein belongs to the pyruvate, phosphate/water dikinase regulatory protein family. PDRP subfamily.

It carries out the reaction N(tele)-phospho-L-histidyl/L-threonyl-[pyruvate, phosphate dikinase] + ADP = N(tele)-phospho-L-histidyl/O-phospho-L-threonyl-[pyruvate, phosphate dikinase] + AMP + H(+). It catalyses the reaction N(tele)-phospho-L-histidyl/O-phospho-L-threonyl-[pyruvate, phosphate dikinase] + phosphate + H(+) = N(tele)-phospho-L-histidyl/L-threonyl-[pyruvate, phosphate dikinase] + diphosphate. Bifunctional serine/threonine kinase and phosphorylase involved in the regulation of the pyruvate, phosphate dikinase (PPDK) by catalyzing its phosphorylation/dephosphorylation. The polypeptide is Putative pyruvate, phosphate dikinase regulatory protein (Staphylococcus aureus).